Here is an 898-residue protein sequence, read N- to C-terminus: DNA mismatch repair protein MutS (898 aa).

646-653 (GPNMGGKS) provides a ligand contact to ATP.

Belongs to the DNA mismatch repair MutS family.

This protein is involved in the repair of mismatches in DNA. It is possible that it carries out the mismatch recognition step. This protein has a weak ATPase activity. The sequence is that of DNA mismatch repair protein MutS from Brucella ovis (strain ATCC 25840 / 63/290 / NCTC 10512).